The chain runs to 359 residues: DNA polymerase IV (359 aa).

In terms of domain architecture, UmuC spans 4-185 (IIHIDMDCYF…LSLRKIPGVG (182 aa)). Positions 8 and 103 each coordinate Mg(2+). Glutamate 104 is a catalytic residue.

It belongs to the DNA polymerase type-Y family. Monomer. Requires Mg(2+) as cofactor.

Its subcellular location is the cytoplasm. The catalysed reaction is DNA(n) + a 2'-deoxyribonucleoside 5'-triphosphate = DNA(n+1) + diphosphate. In terms of biological role, poorly processive, error-prone DNA polymerase involved in untargeted mutagenesis. Copies undamaged DNA at stalled replication forks, which arise in vivo from mismatched or misaligned primer ends. These misaligned primers can be extended by PolIV. Exhibits no 3'-5' exonuclease (proofreading) activity. May be involved in translesional synthesis, in conjunction with the beta clamp from PolIII. The protein is DNA polymerase IV of Shewanella sp. (strain MR-4).